We begin with the raw amino-acid sequence, 117 residues long: Large ribosomal subunit protein bL20 (117 aa).

It belongs to the bacterial ribosomal protein bL20 family.

Functionally, binds directly to 23S ribosomal RNA and is necessary for the in vitro assembly process of the 50S ribosomal subunit. It is not involved in the protein synthesizing functions of that subunit. This is Large ribosomal subunit protein bL20 from Natranaerobius thermophilus (strain ATCC BAA-1301 / DSM 18059 / JW/NM-WN-LF).